The sequence spans 155 residues: MRMYETIFITDPDLQDEVRNTLFDRFKGILEQEGGILANFDDWGNKKLAYEIAKKPRGHYVCMTYGGTGTLVTELERNFRLDDKILKYMTILLEKDIDPEALKLQIDAEAAAKSEADAAKAEADAARVEAEAKKAETDETDETVDAETPENEEEN.

Residues 115–137 (EADAAKAEADAARVEAEAKKAET) are compositionally biased toward basic and acidic residues. The segment at 115-155 (EADAAKAEADAARVEAEAKKAETDETDETVDAETPENEEEN) is disordered. The segment covering 138–155 (DETDETVDAETPENEEEN) has biased composition (acidic residues).

Belongs to the bacterial ribosomal protein bS6 family.

Binds together with bS18 to 16S ribosomal RNA. The protein is Small ribosomal subunit protein bS6 of Desulforapulum autotrophicum (strain ATCC 43914 / DSM 3382 / VKM B-1955 / HRM2) (Desulfobacterium autotrophicum).